A 124-amino-acid chain; its full sequence is MATINQLVRKPRVKKVVKSNVPALEACPQKRGVCTRVYTTTPKKPNSALRKVCRIRLTNGYEVTSYIGGEGHNLQEHSVVLIRGGRVKDLPGVRYHTVRGALDCAGVKDRKQGRSKYGVKRPKS.

A 3-methylthioaspartic acid modification is found at Asp89.

This sequence belongs to the universal ribosomal protein uS12 family. As to quaternary structure, part of the 30S ribosomal subunit. Contacts proteins S8 and S17. May interact with IF1 in the 30S initiation complex.

In terms of biological role, with S4 and S5 plays an important role in translational accuracy. Functionally, interacts with and stabilizes bases of the 16S rRNA that are involved in tRNA selection in the A site and with the mRNA backbone. Located at the interface of the 30S and 50S subunits, it traverses the body of the 30S subunit contacting proteins on the other side and probably holding the rRNA structure together. The combined cluster of proteins S8, S12 and S17 appears to hold together the shoulder and platform of the 30S subunit. In Pasteurella multocida (strain Pm70), this protein is Small ribosomal subunit protein uS12.